Here is a 137-residue protein sequence, read N- to C-terminus: MLLPKRTKYRRPHRIKYEGKAKGNTKVDFGEFGLKSLDGAWITNRQIEAARIAMTRYMKRWGKVWIRIFPHMAKTKKPLEVRMGSGKGSPEEWVAVVKTGTVMFEVAGVSEETALEALRLAMHKLPVRCKIVKKGEE.

Belongs to the universal ribosomal protein uL16 family. As to quaternary structure, part of the 50S ribosomal subunit.

In terms of biological role, binds 23S rRNA and is also seen to make contacts with the A and possibly P site tRNAs. The polypeptide is Large ribosomal subunit protein uL16 (Spiroplasma kunkelii).